The primary structure comprises 236 residues: Demethylmenaquinone methyltransferase (236 aa).

Residues threonine 58, aspartate 79, and 106 to 107 (NA) contribute to the S-adenosyl-L-methionine site.

Belongs to the class I-like SAM-binding methyltransferase superfamily. MenG/UbiE family.

It catalyses the reaction a 2-demethylmenaquinol + S-adenosyl-L-methionine = a menaquinol + S-adenosyl-L-homocysteine + H(+). It participates in quinol/quinone metabolism; menaquinone biosynthesis; menaquinol from 1,4-dihydroxy-2-naphthoate: step 2/2. Functionally, methyltransferase required for the conversion of demethylmenaquinol (DMKH2) to menaquinol (MKH2). The protein is Demethylmenaquinone methyltransferase of Alkalihalophilus pseudofirmus (strain ATCC BAA-2126 / JCM 17055 / OF4) (Bacillus pseudofirmus).